The sequence spans 126 residues: MAFYEHVVIARQDISPQQAEALNEQLKALLEENGGHIAKIEYWGLRNLTYRIKKNRKGHYSLLAIDAPAAAVKEMERQLLINEDVLRFMTIRVEELDLELSPVLARRDRERGERSERPRDDFAPAA.

The segment at 107–126 (RDRERGERSERPRDDFAPAA) is disordered.

It belongs to the bacterial ribosomal protein bS6 family.

Functionally, binds together with bS18 to 16S ribosomal RNA. The chain is Small ribosomal subunit protein bS6 from Caulobacter sp. (strain K31).